The sequence spans 423 residues: D-tagatose-1,6-bisphosphate aldolase subunit GatZ (423 aa).

The protein belongs to the GatZ/KbaZ family. GatZ subfamily. In terms of assembly, forms a complex with GatY.

It participates in carbohydrate metabolism; D-tagatose 6-phosphate degradation; D-glyceraldehyde 3-phosphate and glycerone phosphate from D-tagatose 6-phosphate: step 2/2. Its function is as follows. Component of the tagatose-1,6-bisphosphate aldolase GatYZ that is required for full activity and stability of the Y subunit. Could have a chaperone-like function for the proper and stable folding of GatY. When expressed alone, GatZ does not show any aldolase activity. Is involved in the catabolism of galactitol. The polypeptide is D-tagatose-1,6-bisphosphate aldolase subunit GatZ (Salmonella choleraesuis (strain SC-B67)).